A 287-amino-acid chain; its full sequence is Probable endonuclease 4 (287 aa).

Zn(2+) contacts are provided by His-69, His-109, Glu-144, Asp-178, His-181, His-215, Asp-228, His-230, and Glu-260.

This sequence belongs to the AP endonuclease 2 family. Zn(2+) is required as a cofactor.

It catalyses the reaction Endonucleolytic cleavage to 5'-phosphooligonucleotide end-products.. Endonuclease IV plays a role in DNA repair. It cleaves phosphodiester bonds at apurinic or apyrimidinic (AP) sites, generating a 3'-hydroxyl group and a 5'-terminal sugar phosphate. This is Probable endonuclease 4 from Thermotoga maritima (strain ATCC 43589 / DSM 3109 / JCM 10099 / NBRC 100826 / MSB8).